The following is a 192-amino-acid chain: UPF0149 protein YgfB (192 aa).

It belongs to the UPF0149 family.

The protein is UPF0149 protein YgfB of Salmonella agona (strain SL483).